A 1297-amino-acid chain; its full sequence is MLDVNFFDELRIGLATADDIRQWSHGEVKKPETINYRTLKPEKDGLFCEKIFGPQRDWECYCGKYKRVRFKGIICERCGVEVTRSKVRRERMGHIELAASVTHIWYFKGVPSRLGYLLDLAPKDLEKIIYFASYVVTSVDAEARHRDLATIENEILAEKRQSENSRDSEIEKRAGKLEADLAELEAEGAKADVRRKVKEGGEREMRQIRDRAQREIDRLDEVLDTFRKLEPKQLVTDELLYRELRDRFGEYFTGGMGAEAIKALVQNMDLDAEAESLRETIRTGKGQRKIRALKRLKVVAAFLNTSNSPLGMVLDCVPVIPPDLRPMVQLDGGRFATSDLNDLYRRVINRNNRLKRLIDLGAPEIIVNNEKRMLQEAVDALFDNGRRGRPVTGPGNRPLKSLSDMLKGKQGRFRQNLLGKRVDYSGRSVIVVGPKLKLHQCGLPKQMALELFKPFVMKRLVDLNHAQNIKSAKRMVERQRPVVWDVLEEVIGEHPVLLNRAPTLHRLGIQAFEPQLVEGKAIQIHPLVCTAFNADFDGDQMAVHVPLSAEAQAEARILMLSSNNILKPADGKPVTMPTQDMIIGLYHLTHRTPGERGEGRAFSSDAEARMAFDNGELHLQAPVKIRLRGLVGVESGPGAEPWTAPEGWVEGDPITVETTLGRVLFNETLPPGYRFVNYEIRKGQLSAIVNDLAERFPKVALAATLDGLKEAGFHWATWSGVTIGMEDVLAPPRKREILGRYEKEADRIDKQYQRGLMTAEERRGELIEIWTKATNEVAKEMDTALPQENPLWKMINSGARGNLLQLRQIAAIRGLVANPKGEIIPRPIKASYREGLSVLEYFISTHGARKGLADTALRTADSGYLTRRLVDVSQDVIIREEDCGTDRAIPMQVGQQAGEAGSLVVHEHAETSVHARTLADDIKGPDGTVVAERGADINSILVDKIVAAGVESVRVRSVLTCESKLGVCGACYGRSLPTGKTVDVGEAVGIIAAQSIGEPGTQLTMRTFHTGGVAGEDITQGLPRVQEIFEARIPKGKAPIADTPGRVRIEDGERSRKIIVVPDDGSDEIAYDKISKRVRLLANDGDHVEVGERLTVGTIDPHELLRILGPRAVQVHLTQEVQEVYRSQGVLIHDKHIEIIIRQMLKRVTVIDSGSTEFLPGVLVDRALFESENRRLVSEGGEPAAGRPVLMGITKASLATDSWLSAASFQETTRVLTDAAIHARSDSLIGLKENVIIGKLIPAGTGISKYRNVRVEPTEEAKAKVYSMTGYPETDYGFGPASGQAVPLDDFDFGSYR.

C60, C62, C75, and C78 together coordinate Zn(2+). 3 residues coordinate Mg(2+): D535, D537, and D539. Positions 883, 961, 968, and 971 each coordinate Zn(2+).

The protein belongs to the RNA polymerase beta' chain family. In terms of assembly, the RNAP catalytic core consists of 2 alpha, 1 beta, 1 beta' and 1 omega subunit. When a sigma factor is associated with the core the holoenzyme is formed, which can initiate transcription. Requires Mg(2+) as cofactor. The cofactor is Zn(2+).

It carries out the reaction RNA(n) + a ribonucleoside 5'-triphosphate = RNA(n+1) + diphosphate. Its function is as follows. DNA-dependent RNA polymerase catalyzes the transcription of DNA into RNA using the four ribonucleoside triphosphates as substrates. This chain is DNA-directed RNA polymerase subunit beta', found in Salinispora tropica (strain ATCC BAA-916 / DSM 44818 / JCM 13857 / NBRC 105044 / CNB-440).